The chain runs to 243 residues: Cell division protein FtsQ (243 aa).

The Cytoplasmic segment spans residues Met1 to Lys19. The helical transmembrane segment at Leu20 to Leu40 threads the bilayer. Residues His41–Asn243 lie on the Periplasmic side of the membrane. The POTRA domain maps to Leu46–Gln115.

It belongs to the FtsQ/DivIB family. FtsQ subfamily. As to quaternary structure, part of a complex composed of FtsB, FtsL and FtsQ.

The protein localises to the cell inner membrane. Essential cell division protein. May link together the upstream cell division proteins, which are predominantly cytoplasmic, with the downstream cell division proteins, which are predominantly periplasmic. May control correct divisome assembly. The sequence is that of Cell division protein FtsQ from Coxiella burnetii (strain RSA 493 / Nine Mile phase I).